A 60-amino-acid polypeptide reads, in one-letter code: Cecropin-B type 2 (60 aa).

The signal sequence occupies residues 1 to 24; that stretch reads MNFSKLFALVLLIGLVLLTGQTEA. Isoleucine 58 carries the post-translational modification Isoleucine amide.

The protein belongs to the cecropin family.

It is found in the secreted. In terms of biological role, cecropins have lytic and antibacterial activity against several Gram-positive and Gram-negative bacteria. The polypeptide is Cecropin-B type 2 (CECB2) (Aedes albopictus (Asian tiger mosquito)).